Consider the following 95-residue polypeptide: Small ribosomal subunit protein uS14 (95 aa).

This sequence belongs to the universal ribosomal protein uS14 family. Part of the 30S ribosomal subunit. Contacts proteins S3 and S10.

Its function is as follows. Binds 16S rRNA, required for the assembly of 30S particles and may also be responsible for determining the conformation of the 16S rRNA at the A site. In Fusobacterium nucleatum subsp. nucleatum (strain ATCC 25586 / DSM 15643 / BCRC 10681 / CIP 101130 / JCM 8532 / KCTC 2640 / LMG 13131 / VPI 4355), this protein is Small ribosomal subunit protein uS14.